Here is a 223-residue protein sequence, read N- to C-terminus: Deoxyribose-phosphate aldolase (223 aa).

Aspartate 92 functions as the Proton donor/acceptor in the catalytic mechanism. The active-site Schiff-base intermediate with acetaldehyde is lysine 154. The Proton donor/acceptor role is filled by lysine 182.

This sequence belongs to the DeoC/FbaB aldolase family. DeoC type 1 subfamily.

Its subcellular location is the cytoplasm. The enzyme catalyses 2-deoxy-D-ribose 5-phosphate = D-glyceraldehyde 3-phosphate + acetaldehyde. It participates in carbohydrate degradation; 2-deoxy-D-ribose 1-phosphate degradation; D-glyceraldehyde 3-phosphate and acetaldehyde from 2-deoxy-alpha-D-ribose 1-phosphate: step 2/2. In terms of biological role, catalyzes a reversible aldol reaction between acetaldehyde and D-glyceraldehyde 3-phosphate to generate 2-deoxy-D-ribose 5-phosphate. This chain is Deoxyribose-phosphate aldolase, found in Pasteurella multocida (strain Pm70).